A 279-amino-acid chain; its full sequence is MKIISCIEELRDHLRGQLRTAFVPTMGNLHDGHLSLMRLARKHGDPVVASIFVNRLQFGPNEDFDKYPRTFQADVEKLEKEGVYILFAPTEKDLYPEPQEFRVRPPDDLGNTLEGEFRPGFFSGVTTVVLKLFSCVQPSVAVFGKKDYQQLMIVRNMSKQFALPTEIIAADTYRAEDGLALSSRNVYLSPAERAEAPALFQSLNSVANEVRSGHLDIFELERKAMADLSQRGWKPDYISIRKQSNLQPPSAGDMAQGEKLVVLAAAKLGVTRLIDNLEI.

26 to 33 serves as a coordination point for ATP; the sequence is MGNLHDGH. His-33 acts as the Proton donor in catalysis. Gln-57 serves as a coordination point for (R)-pantoate. Gln-57 lines the beta-alanine pocket. 144–147 is a binding site for ATP; the sequence is GKKD. Gln-150 lines the (R)-pantoate pocket. Residue 181–184 participates in ATP binding; that stretch reads LSSR.

The protein belongs to the pantothenate synthetase family. As to quaternary structure, homodimer.

It is found in the cytoplasm. The enzyme catalyses (R)-pantoate + beta-alanine + ATP = (R)-pantothenate + AMP + diphosphate + H(+). It functions in the pathway cofactor biosynthesis; (R)-pantothenate biosynthesis; (R)-pantothenate from (R)-pantoate and beta-alanine: step 1/1. Functionally, catalyzes the condensation of pantoate with beta-alanine in an ATP-dependent reaction via a pantoyl-adenylate intermediate. The protein is Pantothenate synthetase of Janthinobacterium sp. (strain Marseille) (Minibacterium massiliensis).